The chain runs to 172 residues: Melanocortin-2 receptor accessory protein (172 aa).

Residues 38 to 58 form a helical membrane-spanning segment; it reads IVIAFWVSLAAFVVLLFLILL. 2 disordered regions span residues 105 to 136 and 151 to 172; these read QAQASSVEPGSRTGPDQPLRQESSSTLPLGGF and GPLVRSKPSEPPPGDRTSQLQS.

Belongs to the MRAP family. As to quaternary structure, homodimer and heterodimer. Forms antiparallel homodimers and heterodimers with MRAP2. Interacts with MC1R, MC2R, MC3R, MC4R and MC5R. Expressed in adrenal cortex, testis, breast, thyroid, lymph node, ovary and fat. Expressed in adipose tissues.

It is found in the cell membrane. The protein resides in the endoplasmic reticulum membrane. Modulator of melanocortin receptors (MC1R, MC2R, MC3R, MC4R and MC5R). Acts by increasing ligand-sensitivity of melanocortin receptors and enhancing generation of cAMP by the receptors. Required both for MC2R trafficking to the cell surface of adrenal cells and for signaling in response to corticotropin (ACTH). May be involved in the intracellular trafficking pathways in adipocyte cells. In Homo sapiens (Human), this protein is Melanocortin-2 receptor accessory protein (MRAP).